The sequence spans 144 residues: Nucleoside diphosphate kinase (144 aa).

ATP-binding residues include Lys11, Phe59, Arg87, Thr93, Arg104, and Asn114. Catalysis depends on His117, which acts as the Pros-phosphohistidine intermediate.

Belongs to the NDK family. In terms of assembly, homotetramer. It depends on Mg(2+) as a cofactor.

It is found in the cytoplasm. The catalysed reaction is a 2'-deoxyribonucleoside 5'-diphosphate + ATP = a 2'-deoxyribonucleoside 5'-triphosphate + ADP. It carries out the reaction a ribonucleoside 5'-diphosphate + ATP = a ribonucleoside 5'-triphosphate + ADP. Major role in the synthesis of nucleoside triphosphates other than ATP. The ATP gamma phosphate is transferred to the NDP beta phosphate via a ping-pong mechanism, using a phosphorylated active-site intermediate. This Psychromonas ingrahamii (strain DSM 17664 / CCUG 51855 / 37) protein is Nucleoside diphosphate kinase.